Consider the following 424-residue polypeptide: Glutamyl-tRNA reductase (424 aa).

Residues 49 to 52 (TCNR), serine 105, 110 to 112 (EPQ), and glutamine 116 each bind substrate. Catalysis depends on cysteine 50, which acts as the Nucleophile. 185–190 (GSGETA) serves as a coordination point for NADP(+).

This sequence belongs to the glutamyl-tRNA reductase family. As to quaternary structure, homodimer.

It catalyses the reaction (S)-4-amino-5-oxopentanoate + tRNA(Glu) + NADP(+) = L-glutamyl-tRNA(Glu) + NADPH + H(+). The protein operates within porphyrin-containing compound metabolism; protoporphyrin-IX biosynthesis; 5-aminolevulinate from L-glutamyl-tRNA(Glu): step 1/2. In terms of biological role, catalyzes the NADPH-dependent reduction of glutamyl-tRNA(Glu) to glutamate 1-semialdehyde (GSA). In Legionella pneumophila (strain Paris), this protein is Glutamyl-tRNA reductase.